A 340-amino-acid chain; its full sequence is tRNA N6-adenosine threonylcarbamoyltransferase (340 aa).

Fe cation is bound by residues histidine 113 and histidine 117. Residues 135-139 (LVSGG), aspartate 169, glycine 182, aspartate 186, and asparagine 274 contribute to the substrate site. Residue aspartate 302 participates in Fe cation binding.

This sequence belongs to the KAE1 / TsaD family. The cofactor is Fe(2+).

It is found in the cytoplasm. It carries out the reaction L-threonylcarbamoyladenylate + adenosine(37) in tRNA = N(6)-L-threonylcarbamoyladenosine(37) in tRNA + AMP + H(+). Functionally, required for the formation of a threonylcarbamoyl group on adenosine at position 37 (t(6)A37) in tRNAs that read codons beginning with adenine. Is involved in the transfer of the threonylcarbamoyl moiety of threonylcarbamoyl-AMP (TC-AMP) to the N6 group of A37, together with TsaE and TsaB. TsaD likely plays a direct catalytic role in this reaction. This chain is tRNA N6-adenosine threonylcarbamoyltransferase, found in Mycobacterium sp. (strain KMS).